Reading from the N-terminus, the 116-residue chain is MNLITTIITITITLSAVLATISFWLPQISPDAEKLSPYECGFDPLGSARLPFSLRFFLIAILFLLFDLEIALLLPLPWGDQLHTPTLTLIWSTAVLALLTLGLIYEWTQGGLEWAE.

The next 3 helical transmembrane spans lie at 3-23, 56-76, and 87-107; these read LITT…TISF, FFLI…LLPL, and LTLI…IYEW.

It belongs to the complex I subunit 3 family.

The protein resides in the mitochondrion membrane. It carries out the reaction a ubiquinone + NADH + 5 H(+)(in) = a ubiquinol + NAD(+) + 4 H(+)(out). Functionally, core subunit of the mitochondrial membrane respiratory chain NADH dehydrogenase (Complex I) that is believed to belong to the minimal assembly required for catalysis. Complex I functions in the transfer of electrons from NADH to the respiratory chain. The immediate electron acceptor for the enzyme is believed to be ubiquinone. This is NADH-ubiquinone oxidoreductase chain 3 (MT-ND3) from Oncorhynchus mykiss (Rainbow trout).